We begin with the raw amino-acid sequence, 372 residues long: Methenyltetrahydrofolate synthase domain-containing protein (372 aa).

The segment covering 246-258 (KQAGKDVTLRDEP) has biased composition (basic and acidic residues). Residues 246–289 (KQAGKDVTLRDEPGSQQPAPGPIRRPQDRPQTGSRGGSRSPLQG) are disordered. The 74-residue stretch at 296-369 (ATVCVGNLPF…NALRVSLGQQ (74 aa)) folds into the RRM domain.

This Mus musculus (Mouse) protein is Methenyltetrahydrofolate synthase domain-containing protein (Mthfsd).